Reading from the N-terminus, the 105-residue chain is Small ribosomal subunit protein uS10 (105 aa).

Belongs to the universal ribosomal protein uS10 family. As to quaternary structure, part of the 30S ribosomal subunit.

Its function is as follows. Involved in the binding of tRNA to the ribosomes. The polypeptide is Small ribosomal subunit protein uS10 (Francisella tularensis subsp. mediasiatica (strain FSC147)).